The sequence spans 619 residues: Dihydroxy-acid dehydratase (619 aa).

D81 contacts Mg(2+). Position 122 (C122) interacts with [2Fe-2S] cluster. Mg(2+)-binding residues include D123 and K124. Position 124 is an N6-carboxylysine (K124). C201 contributes to the [2Fe-2S] cluster binding site. E496 is a Mg(2+) binding site. S522 (proton acceptor) is an active-site residue.

It belongs to the IlvD/Edd family. Homodimer. [2Fe-2S] cluster serves as cofactor. The cofactor is Mg(2+).

The enzyme catalyses (2R)-2,3-dihydroxy-3-methylbutanoate = 3-methyl-2-oxobutanoate + H2O. The catalysed reaction is (2R,3R)-2,3-dihydroxy-3-methylpentanoate = (S)-3-methyl-2-oxopentanoate + H2O. It functions in the pathway amino-acid biosynthesis; L-isoleucine biosynthesis; L-isoleucine from 2-oxobutanoate: step 3/4. It participates in amino-acid biosynthesis; L-valine biosynthesis; L-valine from pyruvate: step 3/4. Functionally, functions in the biosynthesis of branched-chain amino acids. Catalyzes the dehydration of (2R,3R)-2,3-dihydroxy-3-methylpentanoate (2,3-dihydroxy-3-methylvalerate) into 2-oxo-3-methylpentanoate (2-oxo-3-methylvalerate) and of (2R)-2,3-dihydroxy-3-methylbutanoate (2,3-dihydroxyisovalerate) into 2-oxo-3-methylbutanoate (2-oxoisovalerate), the penultimate precursor to L-isoleucine and L-valine, respectively. The protein is Dihydroxy-acid dehydratase of Paracidovorax citrulli (strain AAC00-1) (Acidovorax citrulli).